The chain runs to 528 residues: Peptide chain release factor 3 (528 aa).

The 269-residue stretch at 10 to 278 (DKRRTFGIIS…TFVDLAPAPQ (269 aa)) folds into the tr-type G domain. Residues 19-26 (SHPDAGKT), 87-91 (DTPGH), and 141-144 (NKLD) each bind GTP.

It belongs to the TRAFAC class translation factor GTPase superfamily. Classic translation factor GTPase family. PrfC subfamily.

It localises to the cytoplasm. Functionally, increases the formation of ribosomal termination complexes and stimulates activities of RF-1 and RF-2. It binds guanine nucleotides and has strong preference for UGA stop codons. It may interact directly with the ribosome. The stimulation of RF-1 and RF-2 is significantly reduced by GTP and GDP, but not by GMP. The sequence is that of Peptide chain release factor 3 from Oleidesulfovibrio alaskensis (strain ATCC BAA-1058 / DSM 17464 / G20) (Desulfovibrio alaskensis).